A 699-amino-acid chain; its full sequence is Serine/threonine-protein kinase PRR2 (699 aa).

A disordered region spans residues 168–193; the sequence is SSTKKNLANDISDNKHNNNSSNTIGH. The segment covering 184–193 has biased composition (polar residues); sequence NNNSSNTIGH. The region spanning 361–653 is the Protein kinase domain; the sequence is RDLDVVLGEG…INGILQDGWI (293 aa). ATP contacts are provided by residues 367 to 375 and K390; that span reads LGEGSGGKV. The active-site Proton acceptor is the D484.

It belongs to the protein kinase superfamily. Ser/Thr protein kinase family.

It carries out the reaction L-seryl-[protein] + ATP = O-phospho-L-seryl-[protein] + ADP + H(+). The enzyme catalyses L-threonyl-[protein] + ATP = O-phospho-L-threonyl-[protein] + ADP + H(+). In terms of biological role, protein kinase that functions as a regulator in the pheromone-induced mating pathway downstream of mitogen-activated protein kinase (MAPK) FUS3. Diminishes transcriptional induction of genes in response to pheromone signaling. This Saccharomyces cerevisiae (strain ATCC 204508 / S288c) (Baker's yeast) protein is Serine/threonine-protein kinase PRR2 (PRR2).